The primary structure comprises 602 residues: Threonine--tRNA ligase (602 aa).

Residues 208 to 499 (DHRKLGTELK…LTEHCAGEFP (292 aa)) are catalytic. Residues Cys-300, His-351, and His-476 each coordinate Zn(2+).

The protein belongs to the class-II aminoacyl-tRNA synthetase family. As to quaternary structure, homodimer. Zn(2+) serves as cofactor.

The protein localises to the cytoplasm. It catalyses the reaction tRNA(Thr) + L-threonine + ATP = L-threonyl-tRNA(Thr) + AMP + diphosphate + H(+). Catalyzes the attachment of threonine to tRNA(Thr) in a two-step reaction: L-threonine is first activated by ATP to form Thr-AMP and then transferred to the acceptor end of tRNA(Thr). Also edits incorrectly charged L-seryl-tRNA(Thr). This Campylobacter jejuni subsp. jejuni serotype O:2 (strain ATCC 700819 / NCTC 11168) protein is Threonine--tRNA ligase.